The following is a 282-amino-acid chain: Tyrosine recombinase XerA (282 aa).

The Core-binding (CB) domain maps to 2 to 79; that stretch reads SEPNEVIEEF…ALRAYFRFEG (78 aa). The region spanning 95-271 is the Tyr recombinase domain; the sequence is SLPKALTREE…TVEHLRKAQE (177 aa). Catalysis depends on residues Arg-132, Lys-157, His-223, Arg-226, and His-249. Catalysis depends on Tyr-258, which acts as the O-(3'-phospho-DNA)-tyrosine intermediate.

This sequence belongs to the 'phage' integrase family. XerA subfamily.

The protein resides in the cytoplasm. In terms of biological role, site-specific tyrosine recombinase, which acts by catalyzing the cutting and rejoining of the recombining DNA molecules. In Thermococcus kodakarensis (strain ATCC BAA-918 / JCM 12380 / KOD1) (Pyrococcus kodakaraensis (strain KOD1)), this protein is Tyrosine recombinase XerA.